Consider the following 348-residue polypeptide: Protein arginine N-methyltransferase 1 (348 aa).

The SAM-dependent MTase PRMT-type domain occupies 24 to 342 (KDYYFDSYAH…KGEVCDLNEQ (319 aa)). Positions 37, 46, 70, 92, and 121 each coordinate S-adenosyl-L-methionine. Catalysis depends on residues Glu139 and Glu148.

It belongs to the class I-like SAM-binding methyltransferase superfamily. Protein arginine N-methyltransferase family. As to quaternary structure, interacts with daf-16. Interacts with pgl-1 and pgl-3. Interacts with alg-1. In terms of tissue distribution, widely expressed in pharyngeal, body wall muscle, intestinal and vulval cells.

The protein localises to the cytoplasm. Its subcellular location is the nucleus. The catalysed reaction is L-arginyl-[protein] + 2 S-adenosyl-L-methionine = N(omega),N(omega)-dimethyl-L-arginyl-[protein] + 2 S-adenosyl-L-homocysteine + 2 H(+). It carries out the reaction L-arginyl-[protein] + S-adenosyl-L-methionine = N(omega)-methyl-L-arginyl-[protein] + S-adenosyl-L-homocysteine + H(+). Arginine methyltransferase that methylates (mono and asymmetric dimethylation) the guanidino nitrogens of arginyl residues present in target proteins. Catalyzes the formation of monomethylarginine and asymmetric dimethylarginine on histones H2A and H4, a specific tag for epigenetic transcriptional activation. Catalyzes asymmetric arginine dimethylation of mitochondrial proteins necessary for mitochondrial oxidative phosphorylation activity and thus aerobic respiration and ATP synthesis, and the mitochondrial stress response. Methylates arginine residues in P-granule components pgl-1 and pgl-3 to promote P-granule degradation by autophagy in somatic cells to ensure exclusive localization of the P-granules in germ cells. Modulates the interaction of P-granule proteins epg-2 and sepa-1. Methylates arginine residues in daf-16, which blocks ftt-2 binding to daf-16, prevents akt-mediated phosphorylation and allows for daf-16 to translocate to the nucleus. In turn, association with daf-16 therefore allows for the transcriptional activation of daf-16 and regulation of longevity-related genes. Maintains lifespan by modulating daf-16 activity downstream of the daf-2 signaling pathway. Plays a role in heat and oxidative stress resistance. Role in stress resistance and also fat storage may be in association with the daf-2 signaling pathway. Required for normal feeding behavior. In Caenorhabditis elegans, this protein is Protein arginine N-methyltransferase 1.